A 430-amino-acid chain; its full sequence is Adenylosuccinate synthetase (430 aa).

GTP contacts are provided by residues glycine 12–lysine 18 and glycine 40–threonine 42. Catalysis depends on aspartate 13, which acts as the Proton acceptor. Aspartate 13 and glycine 40 together coordinate Mg(2+). IMP is bound by residues aspartate 13 to lysine 16, asparagine 38 to histidine 41, threonine 128, arginine 142, glutamine 223, threonine 238, and arginine 302. Catalysis depends on histidine 41, which acts as the Proton donor. Residue threonine 298–arginine 304 coordinates substrate. GTP is bound by residues arginine 304, serine 330–aspartate 332, and serine 412–glycine 414.

It belongs to the adenylosuccinate synthetase family. In terms of assembly, homodimer. Mg(2+) serves as cofactor.

The protein resides in the cytoplasm. It carries out the reaction IMP + L-aspartate + GTP = N(6)-(1,2-dicarboxyethyl)-AMP + GDP + phosphate + 2 H(+). The protein operates within purine metabolism; AMP biosynthesis via de novo pathway; AMP from IMP: step 1/2. In terms of biological role, plays an important role in the de novo pathway of purine nucleotide biosynthesis. Catalyzes the first committed step in the biosynthesis of AMP from IMP. The chain is Adenylosuccinate synthetase from Streptococcus pyogenes serotype M1.